A 467-amino-acid chain; its full sequence is Serine/threonine-protein phosphatase 2A 56 kDa regulatory subunit epsilon isoform (467 aa).

The interval 1 to 40 (MSSAPTTPPSVDKVDGFSRKSVRKARQKRSQSSSQFRSQG) is disordered. Serine 2 carries the N-acetylserine modification. Threonine 7 bears the Phosphothreonine mark. Positions 20-29 (KSVRKARQKR) are enriched in basic residues. Residues serine 30, serine 32, and serine 34 each carry the phosphoserine modification. Low complexity predominate over residues 30–40 (SQSSSQFRSQG).

Belongs to the phosphatase 2A regulatory subunit B56 family. Found in a complex with at least ARL2, PPP2CB; PPP2R1A, PPP2R2A, PPP2R5E and TBCD. PP2A consists of a common heterodimeric core enzyme, composed of a 36 kDa catalytic subunit (subunit C) and a 65 kDa constant regulatory subunit (PR65 or subunit A), that associates with a variety of regulatory subunits. Proteins that associate with the core dimer include three families of regulatory subunits B (the R2/B/PR55/B55, R3/B''/PR72/PR130/PR59 and R5/B'/B56 families), the 48 kDa variable regulatory subunit, viral proteins, and cell signaling molecules. Interacts with SGO1. Phosphorylated on serine residues.

It localises to the cytoplasm. In terms of biological role, the B regulatory subunit might modulate substrate selectivity and catalytic activity, and might also direct the localization of the catalytic enzyme to a particular subcellular compartment. The chain is Serine/threonine-protein phosphatase 2A 56 kDa regulatory subunit epsilon isoform (PPP2R5E) from Homo sapiens (Human).